The chain runs to 412 residues: Serine hydroxymethyltransferase (412 aa).

Residues Leu117 and 121 to 123 contribute to the (6S)-5,6,7,8-tetrahydrofolate site; that span reads GHL. Lys226 is modified (N6-(pyridoxal phosphate)lysine). Residue 349 to 351 participates in (6S)-5,6,7,8-tetrahydrofolate binding; sequence SPF.

It belongs to the SHMT family. In terms of assembly, homodimer. Pyridoxal 5'-phosphate serves as cofactor.

The protein localises to the cytoplasm. It catalyses the reaction (6R)-5,10-methylene-5,6,7,8-tetrahydrofolate + glycine + H2O = (6S)-5,6,7,8-tetrahydrofolate + L-serine. Its pathway is one-carbon metabolism; tetrahydrofolate interconversion. It functions in the pathway amino-acid biosynthesis; glycine biosynthesis; glycine from L-serine: step 1/1. Functionally, catalyzes the reversible interconversion of serine and glycine with tetrahydrofolate (THF) serving as the one-carbon carrier. This reaction serves as the major source of one-carbon groups required for the biosynthesis of purines, thymidylate, methionine, and other important biomolecules. Also exhibits THF-independent aldolase activity toward beta-hydroxyamino acids, producing glycine and aldehydes, via a retro-aldol mechanism. The chain is Serine hydroxymethyltransferase from Nitratidesulfovibrio vulgaris (strain ATCC 29579 / DSM 644 / CCUG 34227 / NCIMB 8303 / VKM B-1760 / Hildenborough) (Desulfovibrio vulgaris).